Reading from the N-terminus, the 95-residue chain is Co-chaperonin GroES (95 aa).

The protein belongs to the GroES chaperonin family. As to quaternary structure, heptamer of 7 subunits arranged in a ring. Interacts with the chaperonin GroEL.

Its subcellular location is the cytoplasm. Functionally, together with the chaperonin GroEL, plays an essential role in assisting protein folding. The GroEL-GroES system forms a nano-cage that allows encapsulation of the non-native substrate proteins and provides a physical environment optimized to promote and accelerate protein folding. GroES binds to the apical surface of the GroEL ring, thereby capping the opening of the GroEL channel. The chain is Co-chaperonin GroES from Streptococcus thermophilus (strain ATCC BAA-491 / LMD-9).